A 226-amino-acid polypeptide reads, in one-letter code: Calcium-binding protein 1 (226 aa).

A lipid anchor (N-myristoyl glycine) is attached at G2. C4 is lipidated: S-palmitoyl cysteine. 4 EF-hand domains span residues 81-116, 135-152, 158-193, and 195-226; these read EEIEELREAFREFDKDKDGYINCRDLGNCMRTMGYM, GHVDFDDFVELMGPKLLA, IGVKELRDAFREFDTNGDGEISTSELREAMRKLLGH, and VGHRDIEEIIRDVDLNGDGRVDFEEFVRMMSR. Ca(2+) is bound by residues D94, D96, D98, Y100, and D105. The Ca(2+) site is built by D171, N173, D175, and E177. Position 179 is a phosphoserine (S179). E182, D208, N210, D212, R214, and E219 together coordinate Ca(2+).

As to quaternary structure, homodimer. Interacts (via C-terminus) with ITPR1, ITPR2 and ITPR3. This binding is calcium dependent and the interaction correlates with calcium concentration. An additional calcium-independent interaction with the N-terminus of ITPR1 results in a decreased InsP(3) binding to the receptor. Interacts with CACNA1A (via C-terminal CDB motif) in the pre- and postsynaptic membranes. Interacts with CACNA1C (via C-terminal C and IQ motifs). Interacts with CACNA1D. The binding to the C motif is calcium independent whereas the binding to IQ requires the presence of calcium and is mutually exclusive with calmodulin binding. Interacts with TRPC5 (via C-terminus). Interacts (via EF-hands 1 and 2) at microtubules with MAP1LC3B. Interacts with MYO1C. Interacts (via EF-hands 1 and 2) with NSMF (via the central NLS-containing motif region), the interaction occurs in a calcium dependent manner after synaptic NMDA receptor stimulation and prevents nuclear import of NSMF. Interacts with SPACA9. In terms of processing, phosphorylated. The phosphorylation regulates the activity.

It localises to the cytoplasm. Its subcellular location is the cytoskeleton. It is found in the perinuclear region. The protein localises to the cell membrane. The protein resides in the golgi apparatus. It localises to the postsynaptic density. In terms of biological role, modulates calcium-dependent activity of inositol 1,4,5-triphosphate receptors (ITPRs). Inhibits agonist-induced intracellular calcium signaling. Enhances inactivation and does not support calcium-dependent facilitation of voltage-dependent P/Q-type calcium channels. Causes calcium-dependent facilitation and inhibits inactivation of L-type calcium channels by binding to the same sites as calmodulin in the C-terminal domain of CACNA1C, but has an opposite effect on channel function. Suppresses the calcium-dependent inactivation of CACNA1D. Inhibits TRPC5 channels. Prevents NMDA receptor-induced cellular degeneration. Required for the normal transfer of light signals through the retina. The sequence is that of Calcium-binding protein 1 (CABP1) from Bos taurus (Bovine).